The chain runs to 374 residues: MSLEAFHHSEPLTLGVELELQLVSTNDYDLAPYAEDMLRLMKKVPLPGSVVPEMTNSMIEISTGVCHSSSEVLGQLTQIRDALVKSADKLNIAVVGGGTHPFQQWHERRIYDKPRFQELSQLYGYLSKQFTIFGQHVHIGCPDADSALLMLHRMSRYIPHFIALSASSPYVQAQDTQFDSARLNSVFAFPLSGRAPCVLTWSEFEQYFNKMTRTGVVKSMKDFYWDIRPKPEYGTIEIRVFDTPLTIERAAALAGYVQSLAAWFLAEQPFTPTEDDYLVYTYNRFQACRFGLDAVYVDPASGDHMPLRDHILQTLDHVARYAGTHGASGALHMLRGETALGQNDARWLRERQREEQLLAEVSRQAALRFRGHDI.

It belongs to the glutamate--cysteine ligase type 2 family. YbdK subfamily.

It catalyses the reaction L-cysteine + L-glutamate + ATP = gamma-L-glutamyl-L-cysteine + ADP + phosphate + H(+). Functionally, ATP-dependent carboxylate-amine ligase which exhibits weak glutamate--cysteine ligase activity. This Acidovorax ebreus (strain TPSY) (Diaphorobacter sp. (strain TPSY)) protein is Putative glutamate--cysteine ligase 2.